The sequence spans 65 residues: uncharacterized protein (65 aa).

The protein resides in the plastid. The protein localises to the chloroplast. This is an uncharacterized protein from Porphyra purpurea (Red seaweed).